The sequence spans 466 residues: uncharacterized protein (466 aa).

A C2 NT-type domain is found at 4–199; sequence NHNSKAKRPK…IINVSLQLKL (196 aa). 3 disordered regions span residues 262–298, 374–393, and 400–452; these read AKPG…STTI, LGNK…YSTM, and EKKQ…LTDR. The segment covering 266-298 has biased composition (polar residues); that stretch reads TNATGNSTSIKSPTSTNHKSSEMTTKPGLSTTI. 2 positions are modified to phosphoserine: Ser433 and Ser439.

It to S.pombe SpCC1494.08c.

This is an uncharacterized protein from Saccharomyces cerevisiae (strain ATCC 204508 / S288c) (Baker's yeast).